The following is a 452-amino-acid chain: Coiled-coil domain-containing protein 71 (452 aa).

Residues proline 81–alanine 106 form a disordered region. Positions glutamine 87–alanine 106 are enriched in low complexity. Position 129 is a phosphoserine (serine 129). Disordered regions lie at residues proline 209 to serine 256 and alanine 322 to glycine 404. Residues lysine 279–glutamine 344 adopt a coiled-coil conformation. Positions lysine 332–glutamine 344 are enriched in low complexity. Residues arginine 377–proline 386 are compositionally biased toward basic and acidic residues.

This chain is Coiled-coil domain-containing protein 71 (CCDC71), found in Bos taurus (Bovine).